We begin with the raw amino-acid sequence, 26 residues long: GTP-binding protein Rheb (26 aa).

GTP contacts are provided by Ser1, Ser2, Val13, Tyr16, and Thr19. Position 1 (Ser1) interacts with Mg(2+). Residues 16–24 carry the Effector region motif; the sequence is YDPTIENTF. Thr19 provides a ligand contact to Mg(2+).

It belongs to the small GTPase superfamily. Rheb family.

The catalysed reaction is GTP + H2O = GDP + phosphate + H(+). In terms of biological role, binds GTP and exhibits intrinsic GTPase activity. In Crocodylus siamensis (Siamese crocodile), this protein is GTP-binding protein Rheb.